Reading from the N-terminus, the 294-residue chain is Lipoyl synthase 1 (294 aa).

[4Fe-4S] cluster contacts are provided by Cys38, Cys43, Cys49, Cys64, Cys68, Cys71, and Ser279. A Radical SAM core domain is found at 50-268; the sequence is FAGGTATFLI…EEGQTRFGFL (219 aa).

This sequence belongs to the radical SAM superfamily. Lipoyl synthase family. It depends on [4Fe-4S] cluster as a cofactor.

It localises to the cytoplasm. It carries out the reaction [[Fe-S] cluster scaffold protein carrying a second [4Fe-4S](2+) cluster] + N(6)-octanoyl-L-lysyl-[protein] + 2 oxidized [2Fe-2S]-[ferredoxin] + 2 S-adenosyl-L-methionine + 4 H(+) = [[Fe-S] cluster scaffold protein] + N(6)-[(R)-dihydrolipoyl]-L-lysyl-[protein] + 4 Fe(3+) + 2 hydrogen sulfide + 2 5'-deoxyadenosine + 2 L-methionine + 2 reduced [2Fe-2S]-[ferredoxin]. It participates in protein modification; protein lipoylation via endogenous pathway; protein N(6)-(lipoyl)lysine from octanoyl-[acyl-carrier-protein]: step 2/2. Its function is as follows. Catalyzes the radical-mediated insertion of two sulfur atoms into the C-6 and C-8 positions of the octanoyl moiety bound to the lipoyl domains of lipoate-dependent enzymes, thereby converting the octanoylated domains into lipoylated derivatives. The sequence is that of Lipoyl synthase 1 from Prochlorococcus marinus (strain SARG / CCMP1375 / SS120).